The primary structure comprises 312 residues: Putative endo-1,4-beta-xylanase (312 aa).

Residues 1–301 (MKQQYLLDYE…KPCFYSFLQA (301 aa)) form the GH10 domain. The active-site Proton donor is Glu104. The Nucleophile role is filled by Glu216.

The protein belongs to the glycosyl hydrolase 10 (cellulase F) family.

It catalyses the reaction Endohydrolysis of (1-&gt;4)-beta-D-xylosidic linkages in xylans.. It functions in the pathway glycan degradation; xylan degradation. Functionally, could be a xylanase. In Caldicellulosiruptor saccharolyticus (Caldocellum saccharolyticum), this protein is Putative endo-1,4-beta-xylanase.